The sequence spans 307 residues: Putative S-adenosyl-L-methionine-dependent methyltransferase Mflv_5025 (307 aa).

S-adenosyl-L-methionine contacts are provided by residues Asp130 and 159–160; that span reads DL.

Belongs to the UPF0677 family.

Functionally, exhibits S-adenosyl-L-methionine-dependent methyltransferase activity. The chain is Putative S-adenosyl-L-methionine-dependent methyltransferase Mflv_5025 from Mycolicibacterium gilvum (strain PYR-GCK) (Mycobacterium gilvum (strain PYR-GCK)).